The primary structure comprises 136 residues: Histone H3.3 type c (136 aa).

The segment at 1 to 30 (MARTKQTARKSTGAKVPRKHLSSKSSFPSK) is disordered. N6,N6,N6-trimethyllysine; by set1; alternate is present on K5. K5 carries the N6,N6-dimethyllysine; by set1; alternate modification. K5 and K10 each carry N6-acetyllysine; alternate. Residue K5 is modified to N6-methyllysine; by set1; alternate. An N6,N6,N6-trimethyllysine; alternate modification is found at K10. K10 is subject to N6,N6-dimethyllysine; alternate. N6-methyllysine; alternate is present on K10. Phosphoserine is present on S11. K15 bears the N6-acetyllysine mark. N6-acetyllysine; alternate occurs at positions 19, 24, and 37. Residues K19, K24, and K37 each carry the N6-methyllysine; alternate modification. An N6,N6,N6-trimethyllysine; alternate modification is found at K37. Residue K37 is modified to N6,N6-dimethyllysine; alternate. K57 is subject to N6-acetyllysine. K80 bears the N6,N6,N6-trimethyllysine; alternate mark. K80 carries the N6,N6-dimethyllysine; alternate modification. At K80 the chain carries N6-methyllysine; alternate.

Belongs to the histone H3 family. The nucleosome is a histone octamer containing two molecules each of H2A, H2B, H3 and H4 assembled in one H3-H4 heterotetramer and two H2A-H2B heterodimers. The octamer wraps approximately 147 bp of DNA. Post-translationally, acetylation is generally linked to gene activation. Different methylation states of H3K4 mark distinct developmental phases. H3K4me2 is associated with euchromatic regions. H3K4me3 is a mark of active chromatin. set1 is responsible for all mono-, di- and tri-methylation of H3K4. H3K4me facilitates subsequent acetylation of H3 and H4. Methylation at H3K9 is linked to gene repression. In terms of processing, H3S10ph, which is linked to gene activation, prevents methylation at H3K9 but facilitates acetylation of H3 and H4.

Its subcellular location is the nucleus. It is found in the chromosome. Its function is as follows. Core component of nucleosome. Nucleosomes wrap and compact DNA into chromatin, limiting DNA accessibility to the cellular machineries which require DNA as a template. Histones thereby play a central role in transcription regulation, DNA repair, DNA replication and chromosomal stability. DNA accessibility is regulated via a complex set of post-translational modifications of histones, also called histone code, and nucleosome remodeling. This is Histone H3.3 type c (H3c) from Dictyostelium discoideum (Social amoeba).